Here is a 139-residue protein sequence, read N- to C-terminus: Class I hydrophobin A (139 aa).

Positions 1–18 (MKFSIAAAVLALASAVVA) are cleaved as a signal peptide. Disulfide bonds link C45-C113, C53-C107, C54-C88, and C114-C133.

This sequence belongs to the fungal hydrophobin family. As to quaternary structure, self-assembles to form functional amyloid fibrils called rodlets. Self-assembly into fibrillar rodlets occurs spontaneously at hydrophobic:hydrophilic interfaces and the rodlets further associate laterally to form amphipathic monolayers.

It is found in the secreted. Its subcellular location is the cell wall. In terms of biological role, aerial growth, conidiation, and dispersal of filamentous fungi in the environment rely upon a capability of their secreting small amphipathic proteins called hydrophobins (HPBs) with low sequence identity. Class I can self-assemble into an outermost layer of rodlet bundles on aerial cell surfaces, conferring cellular hydrophobicity that supports fungal growth, development and dispersal; whereas Class II form highly ordered films at water-air interfaces through intermolecular interactions but contribute nothing to the rodlet structure. HYPA is a class I hydrophobin that contributes to surface hydrophobicity, and prevents recognition by the cellular immune defense system. The sequence is that of Class I hydrophobin A from Arthroderma benhamiae (strain ATCC MYA-4681 / CBS 112371) (Trichophyton mentagrophytes).